The following is a 188-amino-acid chain: Transcription factor FapR (188 aa).

The protein belongs to the FapR family.

Its function is as follows. Transcriptional factor involved in regulation of membrane lipid biosynthesis by repressing genes involved in fatty acid and phospholipid metabolism. The chain is Transcription factor FapR from Bacillus licheniformis (strain ATCC 14580 / DSM 13 / JCM 2505 / CCUG 7422 / NBRC 12200 / NCIMB 9375 / NCTC 10341 / NRRL NRS-1264 / Gibson 46).